The primary structure comprises 732 residues: Elongation factor 2 (732 aa).

One can recognise a tr-type G domain in the interval Glu-19–Ile-260. GTP contacts are provided by residues Ala-28–Thr-35, Asp-94–His-98, and Asn-148–Asp-151. The residue at position 597 (His-597) is a Diphthamide.

It belongs to the TRAFAC class translation factor GTPase superfamily. Classic translation factor GTPase family. EF-G/EF-2 subfamily.

It localises to the cytoplasm. In terms of biological role, catalyzes the GTP-dependent ribosomal translocation step during translation elongation. During this step, the ribosome changes from the pre-translocational (PRE) to the post-translocational (POST) state as the newly formed A-site-bound peptidyl-tRNA and P-site-bound deacylated tRNA move to the P and E sites, respectively. Catalyzes the coordinated movement of the two tRNA molecules, the mRNA and conformational changes in the ribosome. This is Elongation factor 2 (fusA) from Pyrococcus abyssi (strain GE5 / Orsay).